A 391-amino-acid polypeptide reads, in one-letter code: uncharacterized protein (391 aa).

This is an uncharacterized protein from Rickettsia prowazekii (strain Madrid E).